Reading from the N-terminus, the 47-residue chain is Exoenzymes regulatory protein AepH (47 aa).

Composition is skewed to basic and acidic residues over residues 1 to 17 (MGQEPKGIESRKIQDGH) and 33 to 47 (TKKEKFSRMSRDANV). The disordered stretch occupies residues 1-47 (MGQEPKGIESRKIQDGHVRKKVGRQQGLWVRTTKKEKFSRMSRDANV).

Involved in the control of extracellular enzymes production. Stimulates PEL, PEH, CEL, and PRT production. In Pectobacterium carotovorum subsp. carotovorum (Erwinia carotovora subsp. carotovora), this protein is Exoenzymes regulatory protein AepH (aepH).